A 192-amino-acid chain; its full sequence is UPF0312 protein YPK_1931 (192 aa).

The signal sequence occupies residues 1 to 23 (MINKTLLGLSLGALMFTAGSAVA).

The protein belongs to the UPF0312 family. Type 1 subfamily.

The protein localises to the periplasm. This is UPF0312 protein YPK_1931 from Yersinia pseudotuberculosis serotype O:3 (strain YPIII).